Reading from the N-terminus, the 1829-residue chain is Afadin (1829 aa).

In terms of domain architecture, Ras-associating 1 spans 39–133 (FHGVMRFYFQ…GRFVLKNEND (95 aa)). Positions 129–196 (KNENDAIPAK…PSQGDDSENS (68 aa)) are disordered. Positions 146–186 (EKQEKEGVIQNFKRTLSKKEKKEKKKREKEALRQASDKEER) form a coiled coil. The segment covering 160–172 (TLSKKEKKEKKKR) has biased composition (basic residues). A compositionally biased stretch (basic and acidic residues) spans 173 to 189 (EKEALRQASDKEERPSQ). 3 positions are modified to phosphoserine: S216, S246, and S256. Positions 246–348 (SGGTLRIYAD…LVFQLKRRPP (103 aa)) constitute a Ras-associating 2 domain. The segment covering 356–371 (KKHVEGKPLKGKDRAD) has biased composition (basic and acidic residues). Residues 356-377 (KKHVEGKPLKGKDRADGSGYGS) form a disordered region. 2 positions are modified to phosphoserine: S391 and S424. Residues 441-507 (FGPGIQPHHC…KFVDPIQDHV (67 aa)) form the FHA domain. 5 positions are modified to phosphoserine: S512, S557, S562, S589, and S655. Positions 539-595 (DIHSGTALPASRSTTRLDSDRVSSASSTAERGMVKPMIRLDQEQDYRRRESRTQDAA) are disordered. The segment covering 576–591 (IRLDQEQDYRRRESRT) has biased composition (basic and acidic residues). The 248-residue stretch at 668-915 (NKMVSMMEGV…IENVVAVAEN (248 aa)) folds into the Dilute domain. The PDZ domain maps to 1014 to 1100 (VITVTLKKQN…VVTLEVAKQG (87 aa)). Residues S1090, S1114, S1133, S1147, S1150, S1179, S1180, S1189, and S1206 each carry the phosphoserine modification. Residues 1114–1230 (SPMMQRISDR…PRPEAYPIPT (117 aa)) form a disordered region. Residues 1120-1135 (ISDRRGSGKPRPKSEG) are compositionally biased toward basic and acidic residues. Over residues 1139–1150 (YNNSAQNGSPES) the composition is skewed to polar residues. Over residues 1159–1179 (SEPKKLPGDDRLMKNRADHRS) the composition is skewed to basic and acidic residues. The segment covering 1195–1217 (PYTSGTAAKITSVSTGNLCTEEQ) has biased composition (polar residues). 2 positions are modified to phosphothreonine: T1218 and T1239. Phosphoserine is present on residues S1245 and S1282. Over residues 1300–1309 (ESGMDRKCDS) the composition is skewed to basic and acidic residues. Disordered stretches follow at residues 1300–1533 (ESGM…EKQQ) and 1574–1724 (RLQE…KTQV). Positions 1316–1325 (SSSVESSTSS) are enriched in low complexity. Over residues 1332 to 1344 (SSKSVTPASTLTK) the composition is skewed to polar residues. Phosphoserine is present on S1335. The residue at position 1337 (T1337) is a Phosphothreonine. Over residues 1371–1380 (LPPPPPPPPA) the composition is skewed to pro residues. The segment covering 1401–1412 (NQAAPQSAQVAA) has biased composition (low complexity). Residues 1413 to 1447 (AERKKREEHQRWYEKEKARLEEERERKRREQERKL) are compositionally biased toward basic and acidic residues. Positions 1417-1454 (KREEHQRWYEKEKARLEEERERKRREQERKLGQMRTQS) form a coiled coil. Over residues 1450 to 1464 (MRTQSLNPASFSPLA) the composition is skewed to polar residues. Residues 1494–1510 (TIERRDLQYITISKEEL) are compositionally biased toward basic and acidic residues. Phosphoserine is present on residues S1506 and S1517. The segment covering 1520 to 1533 (PWKRDAREKLEKQQ) has biased composition (basic and acidic residues). The stretch at 1530–1564 (EKQQQMHIVDMLSKEIHELQNKGDRTAEESDRLRK) forms a coiled coil. A compositionally biased stretch (acidic residues) spans 1583 to 1594 (EDDDEEEDDDVD). A coiled-coil region spans residues 1600–1672 (QRLEAERRAR…SRLEAERRRQ (73 aa)). Positions 1602–1682 (LEAERRARLQ…HEEAARRLLE (81 aa)) are enriched in basic and acidic residues. A Phosphoserine modification is found at S1701. A compositionally biased stretch (polar residues) spans 1715–1724 (RNASYLKTQV). S1726 bears the Phosphoserine mark. Residues 1742–1829 (DEEENYVPAG…TELENELNTK (88 aa)) are disordered. Polar residues predominate over residues 1753–1764 (NSYSGSAGTTAG). The span at 1768–1781 (APRDTREKLSRSQD) shows a compositional bias: basic and acidic residues. A phosphoserine mark is found at S1779 and S1804. The span at 1809–1829 (VSDKVKASRKLTELENELNTK) shows a compositional bias: basic and acidic residues. K1812 carries the post-translational modification N6-acetyllysine.

In terms of assembly, homodimer. Interacts with F-actin, nectin and NECTIN3. Essential for the association of nectin and E-cadherin. Isoform 2/s-afadin does not interact with F-actin. Interacts with ZO-1 and occludin, but probably in an indirect manner. Interacts with RIT1, RIT2, NRXN1 and BCR. Interacts with ADAM10; the interaction locks ADAM10 at adherens junctions following ADAM10 recruitment to adherens junctions by TSPAN33. As to expression, isoform 1 is widely expressed, including in heart, brain, spleen, lung, liver, skeletal muscle, kidney and testis. Isoform 2 is mainly expressed in the brain.

It is found in the cell junction. The protein resides in the adherens junction. Belongs to an adhesion system, probably together with the E-cadherin-catenin system, which plays a role in the organization of homotypic, interneuronal and heterotypic cell-cell adherens junctions (AJs). Nectin- and actin-filament-binding protein that connects nectin to the actin cytoskeleton. May play a key role in the organization of epithelial structures of the embryonic ectoderm. Essential for the organization of adherens junctions. The chain is Afadin from Rattus norvegicus (Rat).